The sequence spans 88 residues: MSLLDYFRSEKKNSASLAKERLQIIVAHERSQRGTPDYLPQLKQDILDVIRKYVNVSSDAVQVQFDQNEDDLAVLELNVTLPDEEPKI.

It belongs to the MinE family.

Its function is as follows. Prevents the cell division inhibition by proteins MinC and MinD at internal division sites while permitting inhibition at polar sites. This ensures cell division at the proper site by restricting the formation of a division septum at the midpoint of the long axis of the cell. This Pseudoalteromonas translucida (strain TAC 125) protein is Cell division topological specificity factor.